The following is a 192-amino-acid chain: MRIVFIGPPGAGKGTQCELLSKALKVPHIGTGGMLRALEPESGEQIHLRIDRGHFAPDDFVLQMVAERLSQPDSRTGYLLDGFPRTQVQASAFDKQLVAASLKLDHVLHLQVSADVLIERLRKRGETENRADDSEEFIRERFRIYEDRTAPLLDHYRCQGLVRDIDASDSESLVHASICECLNFTLASPAES.

G10 to T15 is an ATP binding site. The NMP stretch occupies residues G30–A56. Residues T31, R36, G82–R85, and Q89 each bind AMP. An LID region spans residues K123 to D133. Residue R124 coordinates ATP. AMP-binding residues include R130 and R141. Residue D169 participates in ATP binding.

The protein belongs to the adenylate kinase family. As to quaternary structure, monomer.

Its subcellular location is the cytoplasm. The enzyme catalyses AMP + ATP = 2 ADP. It functions in the pathway purine metabolism; AMP biosynthesis via salvage pathway; AMP from ADP: step 1/1. Functionally, catalyzes the reversible transfer of the terminal phosphate group between ATP and AMP. Plays an important role in cellular energy homeostasis and in adenine nucleotide metabolism. This is Adenylate kinase from Rhodopirellula baltica (strain DSM 10527 / NCIMB 13988 / SH1).